The chain runs to 384 residues: 1-deoxy-D-xylulose 5-phosphate reductoisomerase (384 aa).

Positions 10, 11, 12, 13, 36, and 122 each coordinate NADPH. Position 123 (Lys-123) interacts with 1-deoxy-D-xylulose 5-phosphate. Glu-124 provides a ligand contact to NADPH. Asp-148 provides a ligand contact to Mn(2+). Ser-149, Glu-150, Ser-174, and His-197 together coordinate 1-deoxy-D-xylulose 5-phosphate. Glu-150 contributes to the Mn(2+) binding site. Residue Gly-203 coordinates NADPH. 1-deoxy-D-xylulose 5-phosphate-binding residues include Ser-210, Asn-215, Lys-216, and Glu-219. Residue Glu-219 participates in Mn(2+) binding.

Belongs to the DXR family. It depends on Mg(2+) as a cofactor. Mn(2+) is required as a cofactor.

It carries out the reaction 2-C-methyl-D-erythritol 4-phosphate + NADP(+) = 1-deoxy-D-xylulose 5-phosphate + NADPH + H(+). The protein operates within isoprenoid biosynthesis; isopentenyl diphosphate biosynthesis via DXP pathway; isopentenyl diphosphate from 1-deoxy-D-xylulose 5-phosphate: step 1/6. In terms of biological role, catalyzes the NADPH-dependent rearrangement and reduction of 1-deoxy-D-xylulose-5-phosphate (DXP) to 2-C-methyl-D-erythritol 4-phosphate (MEP). In Chlorobium phaeobacteroides (strain DSM 266 / SMG 266 / 2430), this protein is 1-deoxy-D-xylulose 5-phosphate reductoisomerase.